We begin with the raw amino-acid sequence, 585 residues long: RNA polymerase sigma factor RpoD (585 aa).

Positions 67-93 (PASTLVPKDDSKPARKKKESSASTSGS) are disordered. The tract at residues 351-421 (LVKANLRLVV…TRAISDQART (71 aa)) is sigma-70 factor domain-2. An Interaction with polymerase core subunit RpoC motif is present at residues 375-378 (DLIQ). The sigma-70 factor domain-3 stretch occupies residues 430–506 (EQVNKVIRET…DTEVETPVNA (77 aa)). Residues 519–572 (VLHTLPAREQKVIRMRFGLDDGYPQTLEEVGYQFKVTRERIRQIEAKALRRLRH) form a sigma-70 factor domain-4 region. The segment at residues 545 to 564 (LEEVGYQFKVTRERIRQIEA) is a DNA-binding region (H-T-H motif).

It belongs to the sigma-70 factor family. RpoD/SigA subfamily. In terms of assembly, interacts transiently with the RNA polymerase catalytic core.

The protein resides in the cytoplasm. In terms of biological role, sigma factors are initiation factors that promote the attachment of RNA polymerase to specific initiation sites and are then released. This sigma factor is the primary sigma factor during exponential growth. This chain is RNA polymerase sigma factor RpoD, found in Leptospira interrogans serogroup Icterohaemorrhagiae serovar copenhageni (strain Fiocruz L1-130).